The following is a 396-amino-acid chain: Probable sugar efflux transporter (396 aa).

A run of 12 helical transmembrane segments spans residues 15-35 (VVTL…PVGL), 50-70 (VGIM…PFML), 81-101 (LICL…SWSF), 103-123 (VLVI…SITA), 136-156 (AQAL…GLPL), 170-190 (FFAI…LLPL), 209-229 (PALM…YTAY), 246-266 (FATA…VIFG), 275-295 (TLVS…LPAA), 299-319 (IHLG…GLGM), 333-353 (VAMA…ALVG), and 364-384 (MIGY…IIIF).

This sequence belongs to the major facilitator superfamily. SotB (TC 2.A.1.2) family.

It localises to the cell inner membrane. In terms of biological role, involved in the efflux of sugars. The physiological role may be the reduction of the intracellular concentration of toxic sugars or sugar metabolites. The protein is Probable sugar efflux transporter of Escherichia coli (strain SMS-3-5 / SECEC).